Reading from the N-terminus, the 142-residue chain is Large ribosomal subunit protein uL11 (142 aa).

The protein belongs to the universal ribosomal protein uL11 family. Part of the ribosomal stalk of the 50S ribosomal subunit. Interacts with L10 and the large rRNA to form the base of the stalk. L10 forms an elongated spine to which L12 dimers bind in a sequential fashion forming a multimeric L10(L12)X complex. Post-translationally, one or more lysine residues are methylated.

Forms part of the ribosomal stalk which helps the ribosome interact with GTP-bound translation factors. The sequence is that of Large ribosomal subunit protein uL11 from Mycobacterium sp. (strain JLS).